A 521-amino-acid chain; its full sequence is MNNLADTVVVDPGFGGGDKQQQAGPAPQDASVVVPPPATKQSSALKKTSRYRSRSLSASSTDSFSSASYTGSSEDGDDVPPREKVQKNSKGSSDFCVRNIGAQHAFGRREIEIAEQEMPGIIALKKRAAEDKPLKDAKIVGCTHINAQTAVLIETLVELGASVRWAACNIYSTQNEVAAALAESGIPIFAWRGETEEDFWWCIDRCVNAENWQPNMILDDGGDATHLMLKKYPTMFKLVKGIVEESVTGVHRLYQLSKAGKLTVPAMNVNDSVTKTKFDNLYSCKESILDSLKRSTDVMFGGKQVVVCGYGDVGKGCAQALKGQGCIVYITEIDPICALQASMDGFRVVKLNEVIRNVDIVVTATGNKNVVVREHMDKMKSGCIVCNMGHSNTEIDVNGLRTPDLTWEKVRSQVDHIIWPEGKYIILLAEGRLVNLSCSSIPSFAVSITSATQALALIELFNAPPGRYKSDVYLLPKKMDEYVASLHLPTFDAHLTELSDEQAKYMGLNKAGPFKPNYYRY.

The disordered stretch occupies residues M1–S92. Low complexity predominate over residues R54–S73. Substrate-binding residues include D220 and E245. NAD(+) is bound at residue S246–T248. The substrate site is built by K275 and D279. NAD(+)-binding positions include G311 to G316, E332, M388 to H390, N435, K515, K515 to Y519, and Y519.

The protein belongs to the adenosylhomocysteinase family. Interacts with Ahcy; the interaction may negatively regulate Ahcy catalytic activity. NAD(+) is required as a cofactor.

Might play a role in the regulation of methionine metabolism possibly by binding and inactivating Ahcy. This chain is Adenosylhomocysteinase-like 1, found in Drosophila melanogaster (Fruit fly).